The primary structure comprises 290 residues: Nucleotide-binding protein Clos_0574 (290 aa).

8–15 (GLSGAGKS) provides a ligand contact to ATP. 59 to 62 (DIRG) is a binding site for GTP.

Belongs to the RapZ-like family.

Its function is as follows. Displays ATPase and GTPase activities. This Alkaliphilus oremlandii (strain OhILAs) (Clostridium oremlandii (strain OhILAs)) protein is Nucleotide-binding protein Clos_0574.